Reading from the N-terminus, the 381-residue chain is Chorismate synthase (381 aa).

Residues R41 and R47 each contribute to the NADP(+) site. FMN-binding positions include 127 to 129 (RAS), 247 to 248 (QA), G291, 306 to 310 (KPIPT), and R332.

Belongs to the chorismate synthase family. In terms of assembly, homotetramer. FMNH2 serves as cofactor.

It catalyses the reaction 5-O-(1-carboxyvinyl)-3-phosphoshikimate = chorismate + phosphate. Its pathway is metabolic intermediate biosynthesis; chorismate biosynthesis; chorismate from D-erythrose 4-phosphate and phosphoenolpyruvate: step 7/7. Its function is as follows. Catalyzes the anti-1,4-elimination of the C-3 phosphate and the C-6 proR hydrogen from 5-enolpyruvylshikimate-3-phosphate (EPSP) to yield chorismate, which is the branch point compound that serves as the starting substrate for the three terminal pathways of aromatic amino acid biosynthesis. This reaction introduces a second double bond into the aromatic ring system. This chain is Chorismate synthase, found in Anaeromyxobacter dehalogenans (strain 2CP-C).